We begin with the raw amino-acid sequence, 121 residues long: Large ribosomal subunit protein uL24 (121 aa).

This sequence belongs to the universal ribosomal protein uL24 family. In terms of assembly, part of the 50S ribosomal subunit.

Functionally, one of two assembly initiator proteins, it binds directly to the 5'-end of the 23S rRNA, where it nucleates assembly of the 50S subunit. Its function is as follows. Located at the polypeptide exit tunnel on the outside of the subunit. In Pyrococcus horikoshii (strain ATCC 700860 / DSM 12428 / JCM 9974 / NBRC 100139 / OT-3), this protein is Large ribosomal subunit protein uL24.